A 126-amino-acid polypeptide reads, in one-letter code: Protein C10 (126 aa).

An N-acetylalanine modification is found at alanine 2.

It belongs to the UPF0456 family. As to expression, ubiquitously expressed, with higher expression in lung.

Its subcellular location is the cytoplasm. In brain, may be required for corpus callosum development. The sequence is that of Protein C10 (Grcc10) from Mus musculus (Mouse).